Reading from the N-terminus, the 893-residue chain is UPF0182 protein CLB_0018 (893 aa).

The next 7 helical transmembrane spans lie at 9-29 (IPLF…NFII), 49-69 (AIII…WMYY), 94-114 (LFFI…SSSY), 154-174 (VIIS…FILE), 202-222 (LAIV…IKIW), 246-266 (FYKI…LSIV), and 273-293 (VSIC…ASFL).

The protein belongs to the UPF0182 family.

The protein resides in the cell membrane. The polypeptide is UPF0182 protein CLB_0018 (Clostridium botulinum (strain ATCC 19397 / Type A)).